Consider the following 451-residue polypeptide: Deoxyguanosinetriphosphate triphosphohydrolase-like protein (451 aa).

Residues R61–G274 enclose the HD domain.

This sequence belongs to the dGTPase family. Type 2 subfamily.

The protein is Deoxyguanosinetriphosphate triphosphohydrolase-like protein of Actinobacillus succinogenes (strain ATCC 55618 / DSM 22257 / CCUG 43843 / 130Z).